A 93-amino-acid chain; its full sequence is Large ribosomal subunit protein uL23cz/uL23cy (93 aa).

Belongs to the universal ribosomal protein uL23 family. In terms of assembly, part of the 50S ribosomal subunit.

It localises to the plastid. Its subcellular location is the chloroplast. Its function is as follows. Binds to 23S rRNA. The protein is Large ribosomal subunit protein uL23cz/uL23cy (rpl23-A) of Cucumis sativus (Cucumber).